We begin with the raw amino-acid sequence, 452 residues long: UDP-N-acetylmuramoylalanine--D-glutamate ligase (452 aa).

An ATP-binding site is contributed by 119 to 125 (GSNGKTT).

Belongs to the MurCDEF family.

Its subcellular location is the cytoplasm. The catalysed reaction is UDP-N-acetyl-alpha-D-muramoyl-L-alanine + D-glutamate + ATP = UDP-N-acetyl-alpha-D-muramoyl-L-alanyl-D-glutamate + ADP + phosphate + H(+). The protein operates within cell wall biogenesis; peptidoglycan biosynthesis. Functionally, cell wall formation. Catalyzes the addition of glutamate to the nucleotide precursor UDP-N-acetylmuramoyl-L-alanine (UMA). The sequence is that of UDP-N-acetylmuramoylalanine--D-glutamate ligase from Streptococcus pyogenes serotype M12 (strain MGAS9429).